Here is a 257-residue protein sequence, read N- to C-terminus: uncharacterized protein (257 aa).

Residues 7 to 27 traverse the membrane as a helical segment; the sequence is LFLCVSFLLITIFIGGGGFMN.

This sequence belongs to the staphylococcal tandem lipoprotein family.

The protein resides in the cell membrane. This is an uncharacterized protein from Staphylococcus epidermidis (strain ATCC 12228 / FDA PCI 1200).